A 94-amino-acid chain; its full sequence is Co-chaperonin GroES (94 aa).

This sequence belongs to the GroES chaperonin family. Heptamer of 7 subunits arranged in a ring. Interacts with the chaperonin GroEL.

The protein localises to the cytoplasm. Its function is as follows. Together with the chaperonin GroEL, plays an essential role in assisting protein folding. The GroEL-GroES system forms a nano-cage that allows encapsulation of the non-native substrate proteins and provides a physical environment optimized to promote and accelerate protein folding. GroES binds to the apical surface of the GroEL ring, thereby capping the opening of the GroEL channel. This chain is Co-chaperonin GroES, found in Streptococcus equinus (Streptococcus bovis).